The sequence spans 101 residues: Large ribosomal subunit protein bL28 (101 aa).

The protein belongs to the bacterial ribosomal protein bL28 family.

The protein is Large ribosomal subunit protein bL28 of Rhodopseudomonas palustris (strain BisA53).